The sequence spans 157 residues: RNA-binding protein 3 (157 aa).

Residues 6-84 (GKLFVGGLNF…RQIRVDHAGK (79 aa)) form the RRM domain. The residue at position 47 (R47) is an Omega-N-methylarginine. The interval 81 to 157 (HAGKSARGTR…GGNYRDNYDN (77 aa)) is disordered. R105 bears the Asymmetric dimethylarginine; alternate mark. Position 105 is a dimethylated arginine; in A2780 ovarian carcinoma cell line (R105). R105 bears the Omega-N-methylarginine; alternate mark. Gly residues predominate over residues 105–114 (RGGGDQGYGS). 2 positions are modified to omega-N-methylarginine: R121 and R131. Residue S147 is modified to Phosphoserine. Y155 is subject to Phosphotyrosine.

As to quaternary structure, interacts with RPL4. Associates with the 60S ribosomal subunits in an RNA-independent manner. Associates with ribosomes. In terms of processing, arg-105 is dimethylated, probably to asymmetric dimethylarginine. Post-translationally, phosphorylated.

It is found in the nucleus. The protein resides in the cytoplasm. Its subcellular location is the cell projection. The protein localises to the dendrite. Cold-inducible mRNA binding protein that enhances global protein synthesis at both physiological and mild hypothermic temperatures. Reduces the relative abundance of microRNAs, when overexpressed. Enhances phosphorylation of translation initiation factors and active polysome formation. This Homo sapiens (Human) protein is RNA-binding protein 3 (RBM3).